The following is a 219-amino-acid chain: Mediator of RNA polymerase II transcription subunit 21 (219 aa).

The stretch at 86–125 (SAEEQLHKIDSLQKKLVDIEDEKIHAIKKKDDLLKQVDDL) forms a coiled coil. The interval 141–219 (SLAPENVQED…ISESISPGKI (79 aa)) is disordered. Composition is skewed to basic and acidic residues over residues 166-181 (IEQK…KIEG) and 191-204 (SDSK…FMDK). Positions 210–219 (ISESISPGKI) are enriched in polar residues.

It belongs to the Mediator complex subunit 21 family. Component of the Mediator complex.

It is found in the nucleus. Its function is as follows. Component of the Mediator complex, a coactivator involved in the regulated transcription of nearly all RNA polymerase II-dependent genes. Mediator functions as a bridge to convey information from gene-specific regulatory proteins to the basal RNA polymerase II transcription machinery. Mediator is recruited to promoters by direct interactions with regulatory proteins and serves as a scaffold for the assembly of a functional preinitiation complex with RNA polymerase II and the general transcription factors. This chain is Mediator of RNA polymerase II transcription subunit 21 (SRB7), found in Candida glabrata (strain ATCC 2001 / BCRC 20586 / JCM 3761 / NBRC 0622 / NRRL Y-65 / CBS 138) (Yeast).